The following is a 530-amino-acid chain: UDP-glucuronosyltransferase 2B17 (530 aa).

The N-terminal stretch at 1–23 is a signal peptide; the sequence is MSLKWMSVFLLMQLSCYFSSGSC. The N-linked (GlcNAc...) asparagine glycan is linked to Asn65. Residue Lys136 is modified to N6-succinyllysine. Residues Asn316 and Asn483 are each glycosylated (N-linked (GlcNAc...) asparagine). A helical transmembrane segment spans residues 495 to 515; that stretch reads IAFLLACVATMIFMITKCCLF.

The protein belongs to the UDP-glycosyltransferase family. Expressed in various tissues including the liver, kidney, testis, uterus, placenta, mammary gland, adrenal gland, skin and prostate.

The protein resides in the endoplasmic reticulum membrane. The enzyme catalyses glucuronate acceptor + UDP-alpha-D-glucuronate = acceptor beta-D-glucuronoside + UDP + H(+). It catalyses the reaction 17alpha-estradiol + UDP-alpha-D-glucuronate = 17alpha-estradiol 3-O-(beta-D-glucuronate) + UDP + H(+). The catalysed reaction is 17alpha-estradiol + UDP-alpha-D-glucuronate = 17alpha-estradiol 17-O-(beta-D-glucuronate) + UDP + H(+). It carries out the reaction 17beta-estradiol + UDP-alpha-D-glucuronate = 17beta-estradiol 17-O-(beta-D-glucuronate) + UDP + H(+). The enzyme catalyses 17beta-hydroxy-5alpha-androstan-3-one + UDP-alpha-D-glucuronate = 5alpha-dihydrotestosterone 17-O-(beta-D-glucuronate) + UDP + H(+). It catalyses the reaction testosterone + UDP-alpha-D-glucuronate = testosterone 17-O-(beta-D-glucuronate) + UDP + H(+). In terms of biological role, UDP-glucuronosyltransferase (UGT) that catalyzes phase II biotransformation reactions in which lipophilic substrates are conjugated with glucuronic acid to increase the metabolite's water solubility, thereby facilitating excretion into either the urine or bile. Catalyzes the glucuronidation of endogenous steroid hormones such as androgens (epitestosterone, androsterone) and estrogens (estradiol, epiestradiol). The protein is UDP-glucuronosyltransferase 2B17 of Homo sapiens (Human).